Consider the following 535-residue polypeptide: MGSNKSKPKDASQRRRSLEPSENVHGAGGAFPASQTPSKPASADGHRGPSAAFVPPAAEPKLFGGFNSSDTVTSPQRAGPLAGGVTTFVALYDYESRTETDLSFKKGERLQIVNNTEGDWWLAHSLSTGQTGYIPSNYVAPSDSIQAEEWYFGKITRRESERLLLNAENPRGTFLVRESETTKGAYCLSVSDFDNAKGLNVKHYKIRKLDSGGFYITSRTQFNSLQQLVAYYSKHADGLCHRLTTVCPTSKPQTQGLAKDAWEIPRESLRLEVKLGQGCFGEVWMGTWNGTTRVAIKTLKPGTMSPEAFLQEAQVMKKLRHEKLVQLYAVVSEEPIYIVTEYMNKGSLLDFLKGETGKYLRLPQLVDMSAQIASGMAYVERMNYVHRDLRAANILVGENLVCKVADFGLARLIEDNEYTARQGAKFPIKWTAPEAALYGRFTIKSDVWSFGILLTELTTKGRVPYPGMVNREVLDQVERGYRMPCPPECPESLHDLMCQCWRKEPEERPTFEYLQAFLEDYFTSTEPQYQPGENL.

Residues M1–P56 are disordered. G2 carries the N-myristoyl glycine lipid modification. The segment covering K7–E19 has biased composition (basic and acidic residues). 3 positions are modified to phosphoserine: S17, S21, and S74. One can recognise an SH3 domain in the interval G83–S144. The SH2 domain occupies W150–C247. Y186 carries the post-translational modification Phosphotyrosine. The 254-residue stretch at L269 to F522 folds into the Protein kinase domain. Residues L275–V283 and K297 each bind ATP. D388 acts as the Proton acceptor in catalysis. Y418 carries the phosphotyrosine; by autocatalysis modification. A Phosphotyrosine; by FAK2 modification is found at Y418. Y529 carries the phosphotyrosine; by CSK modification.

The protein belongs to the protein kinase superfamily. Tyr protein kinase family. SRC subfamily. As to quaternary structure, part of a complex comprised of PTPRA, BCAR1, BCAR3 (via SH2 domain) and SRC; the formation of the complex is dependent on integrin mediated-tyrosine phosphorylation of PTPRA. Interacts with CDCP1, TGFB1I1 and TOM1L2. Interacts with DDEF1/ASAP1 via its SH3 domain. Interacts with CCPG1. Interacts with the cytoplasmic domain of MUC1, phosphorylates it and increases binding of MUC1 with beta-catenin. Interacts with RALGPS1 via its SH3 domain. Interacts with CAV2 (tyrosine phosphorylated form). Interacts (via the SH3 domain and the protein kinase domain) with ARRB1; the interaction is independent of the phosphorylation state of SRC C-terminus. Interacts with FCAMR and PXN. Interacts with ARRB2. Interacts with ARRB1. Interacts with SRCIN1. Interacts with NDFIP2 and more weakly with NDFIP1. Interacts with PIK3CA and/or PIK3C2B, PTK2/FAK1, ESR1 (dimethylated on arginine) and FAK. Interacts (via SH2 and SH3 domain) with TNK2. Interacts (via protein kinase domain) with the tyrosine phosphorylated form of RUNX3 (via runt domain). Interacts with TRAF3 (via RING-type zinc finger domain). Interacts with RIGI, MAVS and TBK1. Interacts (via SH2 domain) with RACK1; the interaction is enhanced by tyrosine phosphorylation of RACK1 and inhibits SRC activity. Interacts (via SH2 domain) with the 'Tyr-402' phosphorylated form of PTK2B/PYK2. Interacts (via SH2 domain) with FLT3 (tyrosine phosphorylated). Identified in a complex containing FGFR4, NCAM1, CDH2, PLCG1, FRS2, SRC, SHC1, GAP43 and CTTN. Interacts with EPHB1; activates the MAPK/ERK cascade to regulate cell migration. Interacts with ERBB2 and STAT1. Interacts with PDGFRA (tyrosine phosphorylated). Interacts with CSF1R. Interacts (via SH2 domain) with the 'Tyr-9' phosphorylated form of PDPK1. Interacts with DDR2. Interacts with AMOTL2; this interaction regulates the translocation of phosphorylated SRC to peripheral cell-matrix adhesion sites. Interacts with DDR1 and DAB2. Interacts with TRAP1. Interacts with CBLC; the interaction is enhanced when SRC is phosphorylated at 'Tyr-424'. Interacts with ARHGEF5. Interacts (via cytoplasmic domain) with CEACAM1 (via SH2 domain); this interaction is regulated by trans-homophilic cell adhesion. Interacts with MPP2. Interacts with PRR7. Interacts (via kinase domain and to a lesser extent the SH2 domain) directly with PDLIM4; this interaction results in PTPN13-mediated dephosphorylation of this protein leading to its inactivation. Interacts with P85 (PIK3R1 or PIK3R2). Interacts with HNRNPA2B1. Interacts with IL6ST/gp130. Interacts (via SH3 domain) with PELP1 in the presence of 17-beta-estradiol. Interacts with AMBRA1. In terms of processing, myristoylated at Gly-2, and this is essential for targeting to membranes. Dephosphorylated at Tyr-529 by PTPRJ. Phosphorylated on Tyr-529 by c-Src kinase (CSK). The phosphorylated form is termed pp60c-src. Dephosphorylated by PTPRJ at Tyr-418. Normally maintained in an inactive conformation with the SH2 domain engaged with Tyr-529, the SH3 domain engaged with the SH2-kinase linker, and Tyr-418 dephosphorylated. Dephosphorylation of Tyr-529 as a result of protein tyrosine phosphatase (PTP) action disrupts the intramolecular interaction between the SH2 domain and Tyr-529, Tyr-418 can then become autophosphorylated, resulting in SRC activation. Phosphorylation of Tyr-529 by CSK allows this interaction to reform, resulting in SRC inactivation. CDK5-mediated phosphorylation at Ser-74 targets SRC to ubiquitin-dependent degradation and thus leads to cytoskeletal reorganization. Phosphorylated by PTK2/FAK1; this enhances kinase activity. Phosphorylated by PTK2B/PYK2; this enhances kinase activity. Upon activation of IL6ST by IL6, Tyr-418 is phosphorylated and Tyr-529 dephosphorylated. Post-translationally, displays reduced levels of autophosphorylation at Tyr-418 compared to isoform 2. In terms of processing, displays enhanced levels of autophosphorylation at Tyr-418 compared to isoform 1. S-nitrosylation is important for activation of its kinase activity. Post-translationally, ubiquitinated in response to CDK5-mediated phosphorylation. Ubiquitination mediated by CBLC requires SRC autophosphorylation at Tyr-418 and may lead to lysosomal degradation.

The protein resides in the cell membrane. The protein localises to the mitochondrion inner membrane. It is found in the nucleus. Its subcellular location is the cytoplasm. It localises to the cytoskeleton. The protein resides in the perinuclear region. The protein localises to the cell junction. It is found in the focal adhesion. The enzyme catalyses L-tyrosyl-[protein] + ATP = O-phospho-L-tyrosyl-[protein] + ADP + H(+). Its activity is regulated as follows. Phosphorylation by CSK at Tyr-529 inhibits kinase activity. Inhibitory phosphorylation at Tyr-529 is enhanced by heme. Further phosphorylation by CDK1 partially reactivates CSK-inactivated SRC and facilitates complete reactivation by protein tyrosine phosphatase PTPRC. Integrin engagement stimulates kinase activity. Phosphorylation by PTK2/FAK1 enhances kinase activity. Butein and pseudosubstrate-based peptide inhibitors like CIYKYYF act as inhibitors. Phosphorylation at Tyr-418 increases kinase activity. In terms of biological role, non-receptor protein tyrosine kinase which is activated following engagement of many different classes of cellular receptors including immune response receptors, integrins and other adhesion receptors, receptor protein tyrosine kinases, G protein-coupled receptors as well as cytokine receptors. Participates in signaling pathways that control a diverse spectrum of biological activities including gene transcription, immune response, cell adhesion, cell cycle progression, apoptosis, migration, and transformation. Due to functional redundancy between members of the SRC kinase family, identification of the specific role of each SRC kinase is very difficult. SRC appears to be one of the primary kinases activated following engagement of receptors and plays a role in the activation of other protein tyrosine kinase (PTK) families. Receptor clustering or dimerization leads to recruitment of SRC to the receptor complexes where it phosphorylates the tyrosine residues within the receptor cytoplasmic domains. Plays an important role in the regulation of cytoskeletal organization through phosphorylation of specific substrates such as AFAP1. Phosphorylation of AFAP1 allows the SRC SH2 domain to bind AFAP1 and to localize to actin filaments. Cytoskeletal reorganization is also controlled through the phosphorylation of cortactin (CTTN). When cells adhere via focal adhesions to the extracellular matrix, signals are transmitted by integrins into the cell resulting in tyrosine phosphorylation of a number of focal adhesion proteins, including PTK2/FAK1 and paxillin (PXN). In addition to phosphorylating focal adhesion proteins, SRC is also active at the sites of cell-cell contact adherens junctions and phosphorylates substrates such as beta-catenin (CTNNB1), delta-catenin (CTNND1), and plakoglobin (JUP). Another type of cell-cell junction, the gap junction, is also a target for SRC, which phosphorylates connexin-43 (GJA1). SRC is implicated in regulation of pre-mRNA-processing and phosphorylates RNA-binding proteins such as KHDRBS1. Phosphorylates PKP3 at 'Tyr-195' in response to reactive oxygen species, which may cause the release of PKP3 from desmosome cell junctions into the cytoplasm. Also plays a role in PDGF-mediated tyrosine phosphorylation of both STAT1 and STAT3, leading to increased DNA binding activity of these transcription factors. Involved in the RAS pathway through phosphorylation of RASA1 and RASGRF1. Plays a role in EGF-mediated calcium-activated chloride channel activation. Required for epidermal growth factor receptor (EGFR) internalization through phosphorylation of clathrin heavy chain (CLTC and CLTCL1) at 'Tyr-1477'. Involved in beta-arrestin (ARRB1 and ARRB2) desensitization through phosphorylation and activation of GRK2, leading to beta-arrestin phosphorylation and internalization. Has a critical role in the stimulation of the CDK20/MAPK3 mitogen-activated protein kinase cascade by epidermal growth factor. Might be involved not only in mediating the transduction of mitogenic signals at the level of the plasma membrane but also in controlling progression through the cell cycle via interaction with regulatory proteins in the nucleus. Plays an important role in osteoclastic bone resorption in conjunction with PTK2B/PYK2. Both the formation of a SRC-PTK2B/PYK2 complex and SRC kinase activity are necessary for this function. Recruited to activated integrins by PTK2B/PYK2, thereby phosphorylating CBL, which in turn induces the activation and recruitment of phosphatidylinositol 3-kinase to the cell membrane in a signaling pathway that is critical for osteoclast function. Promotes energy production in osteoclasts by activating mitochondrial cytochrome C oxidase. Phosphorylates DDR2 on tyrosine residues, thereby promoting its subsequent autophosphorylation. Phosphorylates RUNX3 and COX2 on tyrosine residues, TNK2 on 'Tyr-284' and CBL on 'Tyr-738'. Enhances RIGI-elicited antiviral signaling. Phosphorylates PDPK1 at 'Tyr-9', 'Tyr-373' and 'Tyr-376'. Phosphorylates BCAR1 at 'Tyr-226'. Phosphorylates CBLC at multiple tyrosine residues, phosphorylation at 'Tyr-341' activates CBLC E3 activity. Phosphorylates synaptic vesicle protein synaptophysin (SYP). Involved in anchorage-independent cell growth. Required for podosome formation. Mediates IL6 signaling by activating YAP1-NOTCH pathway to induce inflammation-induced epithelial regeneration. Phosphorylates OTUB1, promoting deubiquitination of RPTOR. Functionally, non-receptor protein tyrosine kinase which phosphorylates synaptophysin with high affinity. Its function is as follows. Non-receptor protein tyrosine kinase which shows higher basal kinase activity than isoform 1, possibly due to weakened intramolecular interactions which enhance autophosphorylation of Tyr-418 and subsequent activation. The SH3 domain shows reduced affinity with the linker sequence between the SH2 and kinase domains which may account for the increased basal activity. Displays altered substrate specificity compared to isoform 1, showing weak affinity for synaptophysin and for peptide substrates containing class I or class II SH3 domain-binding motifs. Plays a role in L1CAM-mediated neurite elongation, possibly by acting downstream of L1CAM to drive cytoskeletal rearrangements involved in neurite outgrowth. This is Proto-oncogene tyrosine-protein kinase Src from Mus musculus (Mouse).